Reading from the N-terminus, the 350-residue chain is Small ribosomal subunit biogenesis GTPase RsgA (350 aa).

A compositionally biased stretch (polar residues) spans 1–17 (MSKNKLSKGQQRRVQAN). A disordered region spans residues 1-35 (MSKNKLSKGQQRRVQANHQRRLRTDRKPELDDSQL). The region spanning 103-273 (TSVLTRPDLY…VIDSPGVREF (171 aa)) is the CP-type G domain. GTP-binding positions include 159–162 (NKID) and 213–221 (GQSGVGKSS). 4 residues coordinate Zn(2+): C297, C302, H304, and C310.

This sequence belongs to the TRAFAC class YlqF/YawG GTPase family. RsgA subfamily. As to quaternary structure, monomer. Associates with 30S ribosomal subunit, binds 16S rRNA. It depends on Zn(2+) as a cofactor.

The protein resides in the cytoplasm. In terms of biological role, one of several proteins that assist in the late maturation steps of the functional core of the 30S ribosomal subunit. Helps release RbfA from mature subunits. May play a role in the assembly of ribosomal proteins into the subunit. Circularly permuted GTPase that catalyzes slow GTP hydrolysis, GTPase activity is stimulated by the 30S ribosomal subunit. This chain is Small ribosomal subunit biogenesis GTPase RsgA, found in Yersinia enterocolitica serotype O:8 / biotype 1B (strain NCTC 13174 / 8081).